The chain runs to 235 residues: Small ribosomal subunit protein uS3 (235 aa).

The KH type-2 domain occupies 39-107 (VRKFLNKELA…PAQINIAEVK (69 aa)).

The protein belongs to the universal ribosomal protein uS3 family. As to quaternary structure, part of the 30S ribosomal subunit. Forms a tight complex with proteins S10 and S14.

Its function is as follows. Binds the lower part of the 30S subunit head. Binds mRNA in the 70S ribosome, positioning it for translation. The polypeptide is Small ribosomal subunit protein uS3 (Mannheimia succiniciproducens (strain KCTC 0769BP / MBEL55E)).